A 385-amino-acid chain; its full sequence is UDP-N-acetylglucosamine--N-acetylmuramyl-(pentapeptide) pyrophosphoryl-undecaprenol N-acetylglucosamine transferase (385 aa).

UDP-N-acetyl-alpha-D-glucosamine-binding positions include 24 to 26, Asn-143, Arg-180, Ser-214, and Gln-310; that span reads TAG.

It belongs to the glycosyltransferase 28 family. MurG subfamily.

Its subcellular location is the cell membrane. The enzyme catalyses di-trans,octa-cis-undecaprenyl diphospho-N-acetyl-alpha-D-muramoyl-L-alanyl-D-glutamyl-meso-2,6-diaminopimeloyl-D-alanyl-D-alanine + UDP-N-acetyl-alpha-D-glucosamine = di-trans,octa-cis-undecaprenyl diphospho-[N-acetyl-alpha-D-glucosaminyl-(1-&gt;4)]-N-acetyl-alpha-D-muramoyl-L-alanyl-D-glutamyl-meso-2,6-diaminopimeloyl-D-alanyl-D-alanine + UDP + H(+). Its pathway is cell wall biogenesis; peptidoglycan biosynthesis. Cell wall formation. Catalyzes the transfer of a GlcNAc subunit on undecaprenyl-pyrophosphoryl-MurNAc-pentapeptide (lipid intermediate I) to form undecaprenyl-pyrophosphoryl-MurNAc-(pentapeptide)GlcNAc (lipid intermediate II). This Mycolicibacterium smegmatis (strain ATCC 700084 / mc(2)155) (Mycobacterium smegmatis) protein is UDP-N-acetylglucosamine--N-acetylmuramyl-(pentapeptide) pyrophosphoryl-undecaprenol N-acetylglucosamine transferase.